We begin with the raw amino-acid sequence, 68 residues long: Large ribosomal subunit protein uL29 (68 aa).

It belongs to the universal ribosomal protein uL29 family.

This chain is Large ribosomal subunit protein uL29, found in Leuconostoc citreum (strain KM20).